Consider the following 468-residue polypeptide: Glucose-dependent insulinotropic receptor (468 aa).

The Extracellular segment spans residues 1–6 (MESSFS). A helical transmembrane segment spans residues 7-27 (FGVILAVLTILIIAVNALVVV). The Cytoplasmic segment spans residues 28-37 (AMLLSIYKND). The chain crosses the membrane as a helical span at residues 38-58 (GVGLCFTLNLAVADTLIGVAI). Over 59-81 (SGLVTDQLSSSAQHTQKTLCSLR) the chain is Extracellular. Residues 82–102 (MAFVTSSAAASVLTVMLIAFD) traverse the membrane as a helical segment. At 103 to 125 (RYLAIKQPLRYFQIMNGLVAGGC) the chain is on the cytoplasmic side. The chain crosses the membrane as a helical span at residues 126–146 (IAGLWLISYLIGFLPLGVSIF). Over 147-164 (QQTTYHGPCTFFAVFHPR) the chain is Extracellular. A helical transmembrane segment spans residues 165–185 (FVLTLSCAGFFPAVLLFVFFY). The Cytoplasmic portion of the chain corresponds to 186–226 (CDMLKIASVHSQHIRKMEHAGAMVGACRPPRPVNDFKAVRT). The helical transmembrane segment at 227–247 (VSVLIGSFTLSWSPFLITSIV) threads the bilayer. Over 248–262 (QVACHKCCLYQVLEK) the chain is Extracellular. The helical transmembrane segment at 263–283 (YLWLLGVGNSLLNPLIYAYWQ) threads the bilayer. The Cytoplasmic portion of the chain corresponds to 284 to 468 (REVRQQLCHM…MSDPLRTCRG (185 aa)).

The protein belongs to the G-protein coupled receptor 1 family. As to expression, expression restricted to the beta-cells of pancreatic islets.

The protein resides in the cell membrane. Functionally, receptor for the endogenous fatty-acid ethanolamide oleoylethanolamide (OEA) and lysophosphatidylcholine (LPC). Functions as a glucose-dependent insulinotropic receptor. The activity of this receptor is mediated by G proteins which activate adenylate cyclase. Seems to act through a G(s) mediated pathway. The chain is Glucose-dependent insulinotropic receptor (Gpr119) from Rattus norvegicus (Rat).